Reading from the N-terminus, the 400-residue chain is Lipid-A-disaccharide synthase (400 aa).

This sequence belongs to the LpxB family.

The enzyme catalyses a lipid X + a UDP-2-N,3-O-bis[(3R)-3-hydroxyacyl]-alpha-D-glucosamine = a lipid A disaccharide + UDP + H(+). It functions in the pathway bacterial outer membrane biogenesis; LPS lipid A biosynthesis. Condensation of UDP-2,3-diacylglucosamine and 2,3-diacylglucosamine-1-phosphate to form lipid A disaccharide, a precursor of lipid A, a phosphorylated glycolipid that anchors the lipopolysaccharide to the outer membrane of the cell. This chain is Lipid-A-disaccharide synthase, found in Acidobacterium capsulatum (strain ATCC 51196 / DSM 11244 / BCRC 80197 / JCM 7670 / NBRC 15755 / NCIMB 13165 / 161).